Consider the following 102-residue polypeptide: Small ribosomal subunit protein uS10 (102 aa).

This sequence belongs to the universal ribosomal protein uS10 family. Part of the 30S ribosomal subunit.

In terms of biological role, involved in the binding of tRNA to the ribosomes. The chain is Small ribosomal subunit protein uS10 from Pelagibacter ubique (strain HTCC1062).